A 318-amino-acid chain; its full sequence is MSNEYFDPKLKIFSLNSNRELAEEIAKEVGIELGKSSVTHFSDGEIQINIEESIRGCHVYVIQSTSNPVNQNLMELLIMIDALKRASAATINIVMPYYGYARQDRKARSREPITAKLVANLIETAGATRMITLDMHAPQIQGFFDIPIDHLNAVRLLSDYFSERHLGDDLVVVSPDHGGVTRARKMADRLKAPIAIIDKRRPRPNVAEVMNIVGNVEGKVCIIIDDIIDTAGTITLAAKALREAGATKVYACCSHPVLSGPAMKRIEDSPIEKLVVTNSIALPEEKWIDKMEQLSVAALLGEAIVRVHENASVSSLFE.

ATP contacts are provided by residues aspartate 43 to glutamate 45 and arginine 102 to glutamine 103. Residues histidine 136 and aspartate 176 each coordinate Mg(2+). The active site involves lysine 199. D-ribose 5-phosphate contacts are provided by residues arginine 201, aspartate 225, and aspartate 229–threonine 233.

This sequence belongs to the ribose-phosphate pyrophosphokinase family. Class I subfamily. As to quaternary structure, homohexamer. Requires Mg(2+) as cofactor.

It localises to the cytoplasm. It carries out the reaction D-ribose 5-phosphate + ATP = 5-phospho-alpha-D-ribose 1-diphosphate + AMP + H(+). The protein operates within metabolic intermediate biosynthesis; 5-phospho-alpha-D-ribose 1-diphosphate biosynthesis; 5-phospho-alpha-D-ribose 1-diphosphate from D-ribose 5-phosphate (route I): step 1/1. Functionally, involved in the biosynthesis of the central metabolite phospho-alpha-D-ribosyl-1-pyrophosphate (PRPP) via the transfer of pyrophosphoryl group from ATP to 1-hydroxyl of ribose-5-phosphate (Rib-5-P). In Listeria innocua serovar 6a (strain ATCC BAA-680 / CLIP 11262), this protein is Ribose-phosphate pyrophosphokinase 1.